A 343-amino-acid chain; its full sequence is Heat-inducible transcription repressor HrcA (343 aa).

This sequence belongs to the HrcA family.

Negative regulator of class I heat shock genes (grpE-dnaK-dnaJ and groELS operons). Prevents heat-shock induction of these operons. The protein is Heat-inducible transcription repressor HrcA of Thermoanaerobacter sp. (strain X514).